Consider the following 488-residue polypeptide: Acetyl-coenzyme A carboxylase carboxyl transferase subunit beta, chloroplastic (488 aa).

The tract at residues 189–211 (ISGSDSGSSNIRTDGNGSDIRGR) is disordered. Residues 224-488 (LWVQCENCYG…LHGFFPLTQN (265 aa)) enclose the CoA carboxyltransferase N-terminal domain. 4 residues coordinate Zn(2+): cysteine 228, cysteine 231, cysteine 247, and cysteine 250. The C4-type zinc-finger motif lies at 228-250 (CENCYGLNYKKFFKSKMNICEQC).

It belongs to the AccD/PCCB family. Acetyl-CoA carboxylase is a heterohexamer composed of biotin carboxyl carrier protein, biotin carboxylase and 2 subunits each of ACCase subunit alpha and ACCase plastid-coded subunit beta (accD). Requires Zn(2+) as cofactor.

Its subcellular location is the plastid. The protein localises to the chloroplast stroma. It catalyses the reaction N(6)-carboxybiotinyl-L-lysyl-[protein] + acetyl-CoA = N(6)-biotinyl-L-lysyl-[protein] + malonyl-CoA. Its pathway is lipid metabolism; malonyl-CoA biosynthesis; malonyl-CoA from acetyl-CoA: step 1/1. In terms of biological role, component of the acetyl coenzyme A carboxylase (ACC) complex. Biotin carboxylase (BC) catalyzes the carboxylation of biotin on its carrier protein (BCCP) and then the CO(2) group is transferred by the transcarboxylase to acetyl-CoA to form malonyl-CoA. This chain is Acetyl-coenzyme A carboxylase carboxyl transferase subunit beta, chloroplastic, found in Liriodendron tulipifera (Tuliptree).